The primary structure comprises 171 residues: Large ribosomal subunit protein uL10 (171 aa).

This sequence belongs to the universal ribosomal protein uL10 family. In terms of assembly, part of the ribosomal stalk of the 50S ribosomal subunit. The N-terminus interacts with L11 and the large rRNA to form the base of the stalk. The C-terminus forms an elongated spine to which L12 dimers bind in a sequential fashion forming a multimeric L10(L12)X complex.

Functionally, forms part of the ribosomal stalk, playing a central role in the interaction of the ribosome with GTP-bound translation factors. The sequence is that of Large ribosomal subunit protein uL10 from Zymomonas mobilis subsp. mobilis (strain ATCC 31821 / ZM4 / CP4).